The chain runs to 400 residues: Nicotinate phosphoribosyltransferase (400 aa).

Phosphohistidine; by autocatalysis is present on His220.

It belongs to the NAPRTase family. Post-translationally, transiently phosphorylated on a His residue during the reaction cycle. Phosphorylation strongly increases the affinity for substrates and increases the rate of nicotinate D-ribonucleotide production. Dephosphorylation regenerates the low-affinity form of the enzyme, leading to product release.

It catalyses the reaction nicotinate + 5-phospho-alpha-D-ribose 1-diphosphate + ATP + H2O = nicotinate beta-D-ribonucleotide + ADP + phosphate + diphosphate. It functions in the pathway cofactor biosynthesis; NAD(+) biosynthesis; nicotinate D-ribonucleotide from nicotinate: step 1/1. Its function is as follows. Catalyzes the synthesis of beta-nicotinate D-ribonucleotide from nicotinate and 5-phospho-D-ribose 1-phosphate at the expense of ATP. This Escherichia coli O157:H7 protein is Nicotinate phosphoribosyltransferase.